A 444-amino-acid chain; its full sequence is tRNA (guanine-N(7)-)-methyltransferase non-catalytic subunit TRM82 (444 aa).

WD repeat units lie at residues 1–47, 48–99, 100–147, 148–192, 193–237, 238–279, and 308–354; these read MSVI…WSDD, FDKI…LGAP, PIYS…KRFC, FSKR…EPIL, GHVS…DKWL, FGHK…STFD, and FAVS…ITFP. The disordered stretch occupies residues 55 to 92; the sequence is RNTTAKEQQGQSSENENENKKLKSNKGDSIKRTAAKVP. The segment covering 71 to 85 has biased composition (basic and acidic residues); it reads NENKKLKSNKGDSIK. A Phosphoserine modification is found at S93.

The protein belongs to the WD repeat TRM82 family. In terms of assembly, forms a heterodimer with the catalytic subunit TRM8.

The protein resides in the nucleus. The protein operates within tRNA modification; N(7)-methylguanine-tRNA biosynthesis. Its function is as follows. Required for the formation of N(7)-methylguanine at position 46 (m7G46) in tRNA, a modification required to maintain stability of tRNAs; its absence resulting in tRNA decay. In the complex, it is required to stabilize and induce conformational changes of the catalytic subunit. In Saccharomyces cerevisiae (strain ATCC 204508 / S288c) (Baker's yeast), this protein is tRNA (guanine-N(7)-)-methyltransferase non-catalytic subunit TRM82.